The chain runs to 358 residues: Fructose-bisphosphate aldolase (358 aa).

D-glyceraldehyde 3-phosphate is bound at residue serine 62. The active-site Proton donor is the aspartate 109. Zn(2+) contacts are provided by histidine 110, aspartate 144, glutamate 174, and histidine 226. Residue glycine 227 coordinates dihydroxyacetone phosphate. Histidine 264 is a binding site for Zn(2+). Dihydroxyacetone phosphate is bound by residues 265 to 267 and 286 to 289; these read GGS and NIDT.

Belongs to the class II fructose-bisphosphate aldolase family. Requires Zn(2+) as cofactor.

The enzyme catalyses beta-D-fructose 1,6-bisphosphate = D-glyceraldehyde 3-phosphate + dihydroxyacetone phosphate. It functions in the pathway carbohydrate degradation; glycolysis; D-glyceraldehyde 3-phosphate and glycerone phosphate from D-glucose: step 4/4. Functionally, catalyzes the aldol condensation of dihydroxyacetone phosphate (DHAP or glycerone-phosphate) with glyceraldehyde 3-phosphate (G3P) to form fructose 1,6-bisphosphate (FBP) in gluconeogenesis and the reverse reaction in glycolysis. This Edwardsiella ictaluri (strain 93-146) protein is Fructose-bisphosphate aldolase (fba).